Here is a 415-residue protein sequence, read N- to C-terminus: Levansucrase (415 aa).

Sucrose contacts are provided by tryptophan 45, aspartate 46, alanine 132, arginine 202, and aspartate 203. Aspartate 46 (nucleophile) is an active-site residue. Glutamate 287 (proton donor/acceptor) is an active-site residue.

It belongs to the glycosyl hydrolase 68 family.

It localises to the secreted. The enzyme catalyses [6)-beta-D-fructofuranosyl-(2-&gt;](n) alpha-D-glucopyranoside + sucrose = [6)-beta-D-fructofuranosyl-(2-&gt;](n+1) alpha-D-glucopyranoside + D-glucose. Its function is as follows. Catalyzes the synthesis of levan, a fructose polymer, by transferring the fructosyl moiety from sucrose to a growing acceptor molecule. The protein is Levansucrase of Erwinia amylovora (Fire blight bacteria).